The chain runs to 320 residues: o-succinylbenzoate synthase (320 aa).

The active-site Proton donor is Lys133. Positions 161, 190, and 213 each coordinate Mg(2+). The active-site Proton acceptor is Lys235.

Belongs to the mandelate racemase/muconate lactonizing enzyme family. MenC type 1 subfamily. The cofactor is a divalent metal cation.

It catalyses the reaction (1R,6R)-6-hydroxy-2-succinyl-cyclohexa-2,4-diene-1-carboxylate = 2-succinylbenzoate + H2O. Its pathway is quinol/quinone metabolism; 1,4-dihydroxy-2-naphthoate biosynthesis; 1,4-dihydroxy-2-naphthoate from chorismate: step 4/7. It functions in the pathway quinol/quinone metabolism; menaquinone biosynthesis. Its function is as follows. Converts 2-succinyl-6-hydroxy-2,4-cyclohexadiene-1-carboxylate (SHCHC) to 2-succinylbenzoate (OSB). This chain is o-succinylbenzoate synthase, found in Salmonella heidelberg (strain SL476).